The following is a 177-amino-acid chain: Large ribosomal subunit protein uL6 (177 aa).

It belongs to the universal ribosomal protein uL6 family. In terms of assembly, part of the 50S ribosomal subunit.

This protein binds to the 23S rRNA, and is important in its secondary structure. It is located near the subunit interface in the base of the L7/L12 stalk, and near the tRNA binding site of the peptidyltransferase center. This Neisseria gonorrhoeae (strain ATCC 700825 / FA 1090) protein is Large ribosomal subunit protein uL6.